The sequence spans 170 residues: MAPTVMMASSATAVAPFQGLKSTASLPVARRSSRSLGNVSNGGRIRCMQVWPAYGNKKFETLSYLPPLSTDDLLKQVDYLLRNGWIPCLEFSKVGFVYRENSTSPCYYDGRYWTMWKLPMFGCNDATQVYKELQEAIKSYPDAFHRVIGFDNIKQTQCVSFIAYKPPGSD.

2 consecutive transit peptides (chloroplast) follow at residues 1 to 46 and 1 to 47; these read MAPT…GRIR and MAPT…RIRC.

The protein belongs to the RuBisCO small chain family. As to quaternary structure, heterohexadecamer of 8 large and 8 small subunits.

The protein localises to the plastid. It is found in the chloroplast. RuBisCO catalyzes two reactions: the carboxylation of D-ribulose 1,5-bisphosphate, the primary event in carbon dioxide fixation, as well as the oxidative fragmentation of the pentose substrate. Both reactions occur simultaneously and in competition at the same active site. Although the small subunit is not catalytic it is essential for maximal activity. This chain is Ribulose bisphosphate carboxylase small subunit, chloroplastic, found in Zea mays (Maize).